We begin with the raw amino-acid sequence, 549 residues long: Glucose-6-phosphate isomerase (549 aa).

An N6-acetyllysine mark is found at Lys80, Lys228, and Lys234. The Proton donor role is filled by Glu355. Residues His386 and Lys514 contribute to the active site.

Belongs to the GPI family.

Its subcellular location is the cytoplasm. The catalysed reaction is alpha-D-glucose 6-phosphate = beta-D-fructose 6-phosphate. Its pathway is carbohydrate biosynthesis; gluconeogenesis. It functions in the pathway carbohydrate degradation; glycolysis; D-glyceraldehyde 3-phosphate and glycerone phosphate from D-glucose: step 2/4. Catalyzes the reversible isomerization of glucose-6-phosphate to fructose-6-phosphate. The sequence is that of Glucose-6-phosphate isomerase from Shigella flexneri.